The following is a 427-amino-acid chain: Glutamate-1-semialdehyde 2,1-aminomutase (427 aa).

K268 bears the N6-(pyridoxal phosphate)lysine mark.

This sequence belongs to the class-III pyridoxal-phosphate-dependent aminotransferase family. HemL subfamily. The cofactor is pyridoxal 5'-phosphate.

It is found in the cytoplasm. The enzyme catalyses (S)-4-amino-5-oxopentanoate = 5-aminolevulinate. It functions in the pathway porphyrin-containing compound metabolism; protoporphyrin-IX biosynthesis; 5-aminolevulinate from L-glutamyl-tRNA(Glu): step 2/2. The protein is Glutamate-1-semialdehyde 2,1-aminomutase of Methanococcus maripaludis (strain C7 / ATCC BAA-1331).